The chain runs to 354 residues: Probable dual-specificity RNA methyltransferase RlmN (354 aa).

E94 acts as the Proton acceptor in catalysis. A Radical SAM core domain is found at 103–332; that stretch reads GRRRNTACLS…QEAGLEAAIR (230 aa). A disulfide bridge links C110 with C343. 3 residues coordinate [4Fe-4S] cluster: C117, C121, and C124. S-adenosyl-L-methionine-binding positions include 169 to 170, S201, 224 to 226, and N300; these read GE and SLH. Catalysis depends on C343, which acts as the S-methylcysteine intermediate.

It belongs to the radical SAM superfamily. RlmN family. The cofactor is [4Fe-4S] cluster.

It localises to the cytoplasm. It catalyses the reaction adenosine(2503) in 23S rRNA + 2 reduced [2Fe-2S]-[ferredoxin] + 2 S-adenosyl-L-methionine = 2-methyladenosine(2503) in 23S rRNA + 5'-deoxyadenosine + L-methionine + 2 oxidized [2Fe-2S]-[ferredoxin] + S-adenosyl-L-homocysteine. The enzyme catalyses adenosine(37) in tRNA + 2 reduced [2Fe-2S]-[ferredoxin] + 2 S-adenosyl-L-methionine = 2-methyladenosine(37) in tRNA + 5'-deoxyadenosine + L-methionine + 2 oxidized [2Fe-2S]-[ferredoxin] + S-adenosyl-L-homocysteine. Its function is as follows. Specifically methylates position 2 of adenine 2503 in 23S rRNA and position 2 of adenine 37 in tRNAs. In Moorella thermoacetica (strain ATCC 39073 / JCM 9320), this protein is Probable dual-specificity RNA methyltransferase RlmN.